The chain runs to 301 residues: Phosphatidylglycerol--prolipoprotein diacylglyceryl transferase (301 aa).

3 helical membrane-spanning segments follow: residues 17-37 (LAVR…IVVG), 59-79 (MLFY…VLFY), and 97-117 (GGMS…LFAY). Residue Arg142 coordinates a 1,2-diacyl-sn-glycero-3-phospho-(1'-sn-glycerol). 2 consecutive transmembrane segments (helical) span residues 230–250 (MGAI…TVEF) and 265–285 (LSMG…LLVW).

This sequence belongs to the Lgt family.

Its subcellular location is the cell inner membrane. The catalysed reaction is L-cysteinyl-[prolipoprotein] + a 1,2-diacyl-sn-glycero-3-phospho-(1'-sn-glycerol) = an S-1,2-diacyl-sn-glyceryl-L-cysteinyl-[prolipoprotein] + sn-glycerol 1-phosphate + H(+). Its pathway is protein modification; lipoprotein biosynthesis (diacylglyceryl transfer). In terms of biological role, catalyzes the transfer of the diacylglyceryl group from phosphatidylglycerol to the sulfhydryl group of the N-terminal cysteine of a prolipoprotein, the first step in the formation of mature lipoproteins. The protein is Phosphatidylglycerol--prolipoprotein diacylglyceryl transferase of Paraburkholderia phytofirmans (strain DSM 17436 / LMG 22146 / PsJN) (Burkholderia phytofirmans).